Here is a 369-residue protein sequence, read N- to C-terminus: tRNA 2-selenouridine synthase (369 aa).

The Rhodanese domain maps to 12–136 (FLEDTPLMDV…LRNFLFETTR (125 aa)). Cysteine 95 acts as the S-selanylcysteine intermediate in catalysis.

The protein belongs to the SelU family. As to quaternary structure, monomer.

The catalysed reaction is 5-methylaminomethyl-2-thiouridine(34) in tRNA + selenophosphate + (2E)-geranyl diphosphate + H2O + H(+) = 5-methylaminomethyl-2-selenouridine(34) in tRNA + (2E)-thiogeraniol + phosphate + diphosphate. The enzyme catalyses 5-methylaminomethyl-2-thiouridine(34) in tRNA + (2E)-geranyl diphosphate = 5-methylaminomethyl-S-(2E)-geranyl-thiouridine(34) in tRNA + diphosphate. It catalyses the reaction 5-methylaminomethyl-S-(2E)-geranyl-thiouridine(34) in tRNA + selenophosphate + H(+) = 5-methylaminomethyl-2-(Se-phospho)selenouridine(34) in tRNA + (2E)-thiogeraniol. It carries out the reaction 5-methylaminomethyl-2-(Se-phospho)selenouridine(34) in tRNA + H2O = 5-methylaminomethyl-2-selenouridine(34) in tRNA + phosphate. Involved in the post-transcriptional modification of the uridine at the wobble position (U34) of tRNA(Lys), tRNA(Glu) and tRNA(Gln). Catalyzes the conversion of 2-thiouridine (S2U-RNA) to 2-selenouridine (Se2U-RNA). Acts in a two-step process involving geranylation of 2-thiouridine (S2U) to S-geranyl-2-thiouridine (geS2U) and subsequent selenation of the latter derivative to 2-selenouridine (Se2U) in the tRNA chain. In Pseudomonas paraeruginosa (strain DSM 24068 / PA7) (Pseudomonas aeruginosa (strain PA7)), this protein is tRNA 2-selenouridine synthase.